The sequence spans 147 residues: Transthyretin (147 aa).

Residues 1–20 (MASLRLFLLCLAGLIFASEA) form the signal peptide. Residue Cys-30 is modified to Sulfocysteine. Lys-35 lines the L-thyroxine pocket. Residue Glu-62 is modified to 4-carboxyglutamate. Phosphoserine is present on Ser-72. Glu-74 serves as a coordination point for L-thyroxine. Asn-118 is a glycosylation site (N-linked (GlcNAc...) asparagine). Residue Ser-137 coordinates L-thyroxine.

Belongs to the transthyretin family. Homotetramer. Dimer of dimers. In the homotetramer, subunits assemble around a central channel that can accommodate two ligand molecules. Interacts with RBP4. Sulfonation of the reactive cysteine Cys-30 enhances the stability of the native conformation of TTR, avoiding misassembly of the protein leading to amyloid formation. In terms of tissue distribution, detected in serum and cerebrospinal fluid (at protein level). Highly expressed in the choroid plexus. Detected at lower levels in the liver.

It is found in the secreted. Thyroid hormone-binding protein. Probably transports thyroxine from the bloodstream to the brain. The polypeptide is Transthyretin (Ttr) (Rattus norvegicus (Rat)).